Here is a 190-residue protein sequence, read N- to C-terminus: Small ribosomal subunit protein eS7B (190 aa).

The residue at position 2 (S2) is an N-acetylserine. S10 and S31 each carry phosphoserine. Residues K83 and K84 each participate in a glycyl lysine isopeptide (Lys-Gly) (interchain with G-Cter in ubiquitin) cross-link.

Belongs to the eukaryotic ribosomal protein eS7 family. In terms of assembly, component of the small ribosomal subunit (SSU). Mature yeast ribosomes consist of a small (40S) and a large (60S) subunit. The 40S small subunit contains 1 molecule of ribosomal RNA (18S rRNA) and 33 different proteins (encoded by 57 genes). The large 60S subunit contains 3 rRNA molecules (25S, 5.8S and 5S rRNA) and 46 different proteins (encoded by 81 genes). Interacts with snoRNA U3. uS11 interacts with MPP10. Component of the ribosomal small subunit (SSU) processome composed of at least 40 protein subunits and snoRNA U3. Post-translationally, N-terminally acetylated by acetyltransferase NatA. In terms of processing, ubiquitinated at Lys-83 and Lys-84 in response to stalled ribosomes, leading to activation of the No-Go Decay (NGD) pathway: first monoubiquitinated by MOT2/NOT4, followed by formation by HEL2 of 'Lys-63'-linked polyubiquitin chains on monoubiquitin.

Its subcellular location is the cytoplasm. It localises to the nucleus. It is found in the nucleolus. Functionally, component of the ribosome, a large ribonucleoprotein complex responsible for the synthesis of proteins in the cell. The small ribosomal subunit (SSU) binds messenger RNAs (mRNAs) and translates the encoded message by selecting cognate aminoacyl-transfer RNA (tRNA) molecules. The large subunit (LSU) contains the ribosomal catalytic site termed the peptidyl transferase center (PTC), which catalyzes the formation of peptide bonds, thereby polymerizing the amino acids delivered by tRNAs into a polypeptide chain. The nascent polypeptides leave the ribosome through a tunnel in the LSU and interact with protein factors that function in enzymatic processing, targeting, and the membrane insertion of nascent chains at the exit of the ribosomal tunnel. eS7 is involved in nucleolar processing of pre-18S ribosomal RNA and ribosome assembly. The sequence is that of Small ribosomal subunit protein eS7B from Saccharomyces cerevisiae (strain ATCC 204508 / S288c) (Baker's yeast).